A 206-amino-acid chain; its full sequence is Large ribosomal subunit protein uL4 (206 aa).

The tract at residues 47–77 (GTHDTKTRGEVSGGGRKPWRQKGTGRARHGS) is disordered. Residues 63-77 (KPWRQKGTGRARHGS) are compositionally biased toward basic residues.

This sequence belongs to the universal ribosomal protein uL4 family. As to quaternary structure, part of the 50S ribosomal subunit.

Its function is as follows. One of the primary rRNA binding proteins, this protein initially binds near the 5'-end of the 23S rRNA. It is important during the early stages of 50S assembly. It makes multiple contacts with different domains of the 23S rRNA in the assembled 50S subunit and ribosome. Functionally, forms part of the polypeptide exit tunnel. The chain is Large ribosomal subunit protein uL4 from Carboxydothermus hydrogenoformans (strain ATCC BAA-161 / DSM 6008 / Z-2901).